Reading from the N-terminus, the 617-residue chain is Electron transfer flavoprotein-ubiquinone oxidoreductase, mitochondrial (617 aa).

Residues 1–33 (MLVPLAKLSCPAYQCFHALKIKKNYLPLCATRW) constitute a mitochondrion transit peptide. Residue 71–85 (VVIVGAGPAGLSAAV) participates in FAD binding. The residue at position 96 (lysine 96) is an N6-acetyllysine. The stretch at 109–130 (IGAHTLSGACLDPGAFKELFPD) is an intramembrane region. 2 positions are modified to N6-acetyllysine: lysine 132 and lysine 223. Residues glycine 305 and glycine 306 each coordinate a ubiquinone. An N6-acetyllysine modification is found at lysine 357. Residues 428 to 447 (MGLHVTEYEDNLKNSWVWKE) lie within the membrane without spanning it. Phosphoserine is present on serine 551. 4 residues coordinate [4Fe-4S] cluster: cysteine 561, cysteine 586, cysteine 589, and cysteine 592. One can recognise a 4Fe-4S ferredoxin-type domain in the interval 577–606 (FRLQINAQNCVHCKTCDIKDPSQNINWVVP).

Belongs to the ETF-QO/FixC family. Monomer. [4Fe-4S] cluster is required as a cofactor. It depends on FAD as a cofactor.

The protein resides in the mitochondrion inner membrane. The catalysed reaction is a ubiquinone + reduced [electron-transfer flavoprotein] = a ubiquinol + oxidized [electron-transfer flavoprotein] + H(+). Accepts electrons from ETF and reduces ubiquinone. This is Electron transfer flavoprotein-ubiquinone oxidoreductase, mitochondrial (ETFDH) from Pongo abelii (Sumatran orangutan).